The following is a 246-amino-acid chain: Small ribosomal subunit protein uS3 (246 aa).

Residues 38–106 form the KH type-2 domain; that stretch reads IRQYLNARLA…DVQINIYEIR (69 aa). The segment at 218-246 is disordered; that stretch reads VAKNQSRRPNAQGGNNRGGDRNRRRKGNR.

The protein belongs to the universal ribosomal protein uS3 family. In terms of assembly, part of the 30S ribosomal subunit. Forms a tight complex with proteins S10 and S14.

In terms of biological role, binds the lower part of the 30S subunit head. Binds mRNA in the 70S ribosome, positioning it for translation. This Porphyromonas gingivalis (strain ATCC 33277 / DSM 20709 / CIP 103683 / JCM 12257 / NCTC 11834 / 2561) protein is Small ribosomal subunit protein uS3.